A 556-amino-acid polypeptide reads, in one-letter code: Oxygen-dependent choline dehydrogenase (556 aa).

Residue 4-33 (DYIIIGAGSAGNVLATRLTEDPNTSVLLLE) coordinates FAD. Histidine 473 (proton acceptor) is an active-site residue.

The protein belongs to the GMC oxidoreductase family. It depends on FAD as a cofactor.

It catalyses the reaction choline + A = betaine aldehyde + AH2. The catalysed reaction is betaine aldehyde + NAD(+) + H2O = glycine betaine + NADH + 2 H(+). Its pathway is amine and polyamine biosynthesis; betaine biosynthesis via choline pathway; betaine aldehyde from choline (cytochrome c reductase route): step 1/1. Functionally, involved in the biosynthesis of the osmoprotectant glycine betaine. Catalyzes the oxidation of choline to betaine aldehyde and betaine aldehyde to glycine betaine at the same rate. In Escherichia coli O139:H28 (strain E24377A / ETEC), this protein is Oxygen-dependent choline dehydrogenase.